A 1373-amino-acid chain; its full sequence is Ribonuclease 3 (1373 aa).

Disordered stretches follow at residues 1 to 99 (MQGN…PVRP), 119 to 406 (MPPP…EEEL), and 447 to 496 (FEEE…SSSS). Residues 47–69 (PAQYQYEPPSAPSSSYSNSQAPS) show a composition bias toward low complexity. 3 stretches are compositionally biased toward pro residues: residues 70-99 (FMPPRPDFVPYPPPAAPSAQGPLPPCPVRP), 119-133 (MPPPMPCPNNPPASG), and 144-159 (MVPPPSMPHPPPPPVM). Low complexity-rich tracts occupy residues 160-169 (PQQVNYQYPP) and 185-200 (NNSSSFPPSANSSSTP). Composition is skewed to basic and acidic residues over residues 214-271 (QNER…DRGR), 278-288 (RSYERSRERDR), and 297-312 (RRSPSLERSYKKEYKR). A phosphoserine mark is found at S354 and S372. 2 stretches are compositionally biased toward basic and acidic residues: residues 363–398 (RWEEEKDRWSDSQGSGKEKNYTSIKEKEAEEVPPEK) and 447–459 (FEEELGNRQEKAK). Positions 389–1364 (KEAEEVPPEK…RWEREHQERE (976 aa)) are necessary for interaction with DGCR8 and pri-miRNA processing activity. A compositionally biased stretch (acidic residues) spans 474-490 (EDLESSSESECETDDDS). Zn(2+) contacts are provided by C535, C537, H548, C560, H608, C675, and H679. RNase III domains follow at residues 875-1055 (LMHL…LEGS) and 1106-1232 (LTEF…IDKD). Residue E968 participates in Mg(2+) binding. A Zn(2+)-binding site is contributed by H1025. Residues N1041, E1044, E1146, D1218, and E1221 each coordinate Mg(2+). The DRBM domain occupies 1259-1333 (DPKSQLQQCC…AMDALEKYNF (75 aa)).

This sequence belongs to the ribonuclease III family. As to quaternary structure, component of the microprocessor complex, or pri-miRNA processing protein complex, which is composed of DROSHA and DGCR8. The microprocessor complex is a heterotrimer; each of the two DROSHA RNase III domains binds one DGCR8 (via C-terminal region). Interacts with SP1 and SNIP1. Interacts with SRRT/ARS2. Interacts with CPSF3 and ISY1; this interaction is in an RNA dependent manner. Interacts with PUS10; interaction promotes pri-miRNAs processing. It depends on Mg(2+) as a cofactor. The cofactor is Mn(2+). In terms of processing, degraded by autophagy in response to neuronal activity in motor neurons. Expressed in motor neurons (at protein level).

The protein localises to the nucleus. It localises to the nucleolus. It is found in the cytoplasm. The enzyme catalyses Endonucleolytic cleavage to 5'-phosphomonoester.. Ribonuclease III double-stranded (ds) RNA-specific endoribonuclease that is involved in the initial step of microRNA (miRNA) biogenesis. Component of the microprocessor complex that is required to process primary miRNA transcripts (pri-miRNAs) to release precursor miRNA (pre-miRNA) in the nucleus. Within the microprocessor complex, DROSHA cleaves the 3' and 5' strands of a stem-loop in pri-miRNAs (processing center 11 bp from the dsRNA-ssRNA junction) to release hairpin-shaped pre-miRNAs that are subsequently cut by the cytoplasmic DICER to generate mature miRNAs. Involved also in pre-rRNA processing. Cleaves double-strand RNA and does not cleave single-strand RNA. Involved in the formation of GW bodies. Plays a role in growth homeostasis in response to autophagy in motor neurons. The sequence is that of Ribonuclease 3 (Drosha) from Mus musculus (Mouse).